Here is a 226-residue protein sequence, read N- to C-terminus: Probable thiol methyltransferase 2 (226 aa).

The S-adenosyl-L-methionine site is built by tryptophan 29, tryptophan 33, tryptophan 40, and glycine 67. Position 79 is a phosphoserine (serine 79). S-adenosyl-L-methionine is bound by residues aspartate 88, 116–117 (DF), and tyrosine 132.

The protein belongs to the class I-like SAM-binding methyltransferase superfamily. TPMT family.

It carries out the reaction a thiol + S-adenosyl-L-methionine = a methyl thioether + S-adenosyl-L-homocysteine + H(+). S-adenosyl-L-methionine-dependent methyltransferase. The protein is Probable thiol methyltransferase 2 (HOL3) of Arabidopsis thaliana (Mouse-ear cress).